Consider the following 344-residue polypeptide: GTP 3',8-cyclase (344 aa).

One can recognise a Radical SAM core domain in the interval 19–239 (PFGRTIDYLR…ANYTLTDLPD (221 aa)). Arg28 provides a ligand contact to GTP. [4Fe-4S] cluster contacts are provided by Cys35 and Cys39. Tyr41 provides a ligand contact to S-adenosyl-L-methionine. Residue Cys42 coordinates [4Fe-4S] cluster. Arg77 is a binding site for GTP. Gly81 is an S-adenosyl-L-methionine binding site. Thr111 is a GTP binding site. An S-adenosyl-L-methionine-binding site is contributed by Ser135. Residue Lys171 participates in GTP binding. Residue Met205 coordinates S-adenosyl-L-methionine. Positions 268 and 271 each coordinate [4Fe-4S] cluster. 273 to 275 (RVR) contacts GTP. Residue Cys285 coordinates [4Fe-4S] cluster.

The protein belongs to the radical SAM superfamily. MoaA family. As to quaternary structure, monomer and homodimer. Requires [4Fe-4S] cluster as cofactor.

The catalysed reaction is GTP + AH2 + S-adenosyl-L-methionine = (8S)-3',8-cyclo-7,8-dihydroguanosine 5'-triphosphate + 5'-deoxyadenosine + L-methionine + A + H(+). Its pathway is cofactor biosynthesis; molybdopterin biosynthesis. Its function is as follows. Catalyzes the cyclization of GTP to (8S)-3',8-cyclo-7,8-dihydroguanosine 5'-triphosphate. The chain is GTP 3',8-cyclase from Rhodopseudomonas palustris (strain ATCC BAA-98 / CGA009).